The sequence spans 444 residues: Sperm-associated antigen 4 protein (444 aa).

The disordered stretch occupies residues 1–109; that stretch reads MRRNPRPGSA…GGASEPSGSP (109 aa). Residues 19 to 36 show a composition bias toward low complexity; it reads NFYSENSNSSHSATSGDS. 2 helical membrane passes run 137–159 and 166–188; these read FLSL…LVCV and IRFL…WGLL. A coiled-coil region spans residues 204–241; the sequence is LSQYHHRVHSQGQQLQQLQAELSKLHKEVTSVRAAHSE. The SUN domain maps to 267–428; the sequence is GASIDLEKTS…YRVRAHGVRI (162 aa).

As to quaternary structure, self-associates. Interacts with ODF1. May associate with microtubules. Interacts with SUN3 and SYNE1; suggesting the formation of a LINC complexs; a SUN domain-based heterotrimer of SPAG4 and SUN3 may associate with SYNE1. Interacts with SEPT12 and LMNB1; during spermatogenesis. As to expression, testis specific. Exclusively expressed in spermatids.

It localises to the membrane. The protein localises to the cytoplasm. It is found in the cytoskeleton. Its subcellular location is the flagellum axoneme. The protein resides in the nucleus envelope. It localises to the nucleus inner membrane. In terms of biological role, involved in spermatogenesis. Required for sperm head formation but not required to establish and maintain general polarity of the sperm head. Required for anchoring and organization of the manchette. Required for targeting of SUN3 and probably SYNE1 through a probable SUN1:SYNE3 LINC complex to the nuclear envelope and involved in accurate posterior sperm head localization of the complex. May anchor SUN3 the nuclear envelope. Involved in maintenance of the nuclear envelope integrity. May assist the organization and assembly of outer dense fibers (ODFs), a specific structure of the sperm tail. The polypeptide is Sperm-associated antigen 4 protein (Spag4) (Rattus norvegicus (Rat)).